The sequence spans 26 residues: Potassium channel toxin alpha-KTx6 OcyKTx1 (26 aa).

Residues cysteine 3 and cysteine 24 are joined by a disulfide bond.

It belongs to the short scorpion toxin superfamily. Potassium channel inhibitor family. Alpha-KTx 06 subfamily. Expressed by the venom gland.

The protein resides in the secreted. Functionally, blocks voltage-gated potassium channels. The polypeptide is Potassium channel toxin alpha-KTx6 OcyKTx1 (Opisthacanthus cayaporum (South American scorpion)).